Reading from the N-terminus, the 129-residue chain is Glycine cleavage system H protein (129 aa).

The region spanning 24 to 106 (TYTVGITEHA…YTDGWIFKIK (83 aa)) is the Lipoyl-binding domain. Lys-65 is modified (N6-lipoyllysine).

The protein belongs to the GcvH family. As to quaternary structure, the glycine cleavage system is composed of four proteins: P, T, L and H. (R)-lipoate is required as a cofactor.

In terms of biological role, the glycine cleavage system catalyzes the degradation of glycine. The H protein shuttles the methylamine group of glycine from the P protein to the T protein. The sequence is that of Glycine cleavage system H protein from Klebsiella pneumoniae subsp. pneumoniae (strain ATCC 700721 / MGH 78578).